Here is a 370-residue protein sequence, read N- to C-terminus: F-box protein At1g66490 (370 aa).

Residues 1-46 enclose the F-box domain; that stretch reads MRTISDLPVALVEEILSRVPLTSLSAVRSTCKTWNALSKTQIFGKT.

This chain is F-box protein At1g66490, found in Arabidopsis thaliana (Mouse-ear cress).